A 475-amino-acid polypeptide reads, in one-letter code: MEKPEFKVIIVGGSIAGLTLAHCLAQANIDHVVLEKRSAIAPQEGAFIGIWPNGARVFEQLGIFGDMEKQTVPFHRMHLRYPDGFSFSSSLPELVSERFGYPIITLDRQRVLEVLHERYPFKSNIIVNKKVVEIQTLDHGARVVTEDGAVYTGDLIVGADGVHSSIRSEMWRLADAISPGLITEHERKSLTVEYACVFGISSPIPGLESGELINSYSDGSCVITFHGEDGRVFWFMIEKLQRKYVYPDNPRFSVDDAAGFCARLSSVPIWRDICVAHLWRNRISVSMTALEEGLFQTWHFGRVVLLGDSVHKMTPNIGQGANTAVEDAATLASLINGLLKSGSASHTSDSDINNLLRVFQSLRYDRVKRTYQQSCSGARLQTRDDFLKILVGRYVFPYVGDYISHSMCKDISGGHVIDFLPLPKRSKAGWAKYSRSNRSRATQLQWGSIWLSPVILCLFCMLFLWPWSSSLPISS.

Positions 35, 49, and 108 each coordinate FAD. The active site involves Y216. Residues D308 and A321 each coordinate FAD. The N-linked (GlcNAc...) asparagine glycan is linked to N437. The helical transmembrane segment at 446 to 466 (WGSIWLSPVILCLFCMLFLWP) threads the bilayer.

This sequence belongs to the paxM FAD-dependent monooxygenase family. The cofactor is FAD.

It localises to the membrane. It catalyses the reaction [(1'E)-3'-hydroxy-3',7'-dimethylocta-1',6'-dien-1'-yl]-quinolinone B + NADPH + O2 + H(+) = [(1'E)-5'-(3',3'-dimethyloxiran-2'-yl)-3'-hydroxy-3'-methylpent-1'-en-1'-yl]-quinolinone B + NADP(+) + H2O. It functions in the pathway secondary metabolite biosynthesis. The protein operates within alkaloid biosynthesis. It participates in mycotoxin biosynthesis. FAD-dependent monooxygenase; part of the gene cluster that mediates the biosynthesis of penigequinolones, potent insecticidal alkaloids that contain a highly modified 10-carbon prenyl group. The first stage is catalyzed by the nonribosomal peptide synthetase penN that condenses anthranilic acid and O-methyl-L-tyrosine to produce 4'-methoxycyclopeptin. 4'-methoxycyclopeptin is then converted to 4'-methoxydehydrocyclopeptin by the ketoglutarate-dependent dioxygenase penM through dehydrogenation to form a double bond between C-alpha and C-beta of the O-methyltyrosine side chain. PenM also converts its first product methoxydehydrocyclopeptin to 4'-methoxycyclopenin. The following conversion of 4'methoxycyclopenin into 4'-methoxyviridicatin is catalyzed by the cyclopenase penL. 4'-methoxyviridicatin is the precursor of quinolone natural products, and is further converted to quinolinone B. The prenyltransferase penI then catalyzes the canonical Friedel-Crafts alkylation of quinolinone B with dimethylallyl cation to yield dimethylallyl quinolone, which is subjected to FAD-dependent dehydrogenation by the FAD-linked oxidoreductase penH to yield conjugated aryl diene. The delta(3') double bond then serves as the site of the second alkylation with DMAPP catalyzed by the prenyltransferase penG to yield a carbenium ion intermediate, which can be attacked by H(2)O to yield a styrenyl quinolone containing a C3'-hydroxyprenyl chain, or undergo cyclization to yield yaequinolones J1 and J2. The conversion of the styrenyl quinolone into the tetrahydrofuran-containing yaequinolone C is performed by the FAD-dependent monooxygenase penE and involves epoxidation of the terminal C7'-C8' olefin, followed by epoxide ring opening initiated by the C3' hydroxyl group. The predicted cysteine hydrolase penJ acts as an epoxide hydrolase that enhances the rate of the 5-exo-tet cyclization step, increasing the yield of yaequinolone C. PenF catalyzes the cationic rearrangement of the epoxide formed by penE (before ring opening to produce yaequinolone C) into yaequinolone D. Finally, the short-chain dehydrogenase/reductase (SDR)-like reductase penD, catalyzes both the dehydration of yaequinolone D and the reduction of the resulting oxonium to yield penigequinolone. The sequence is that of FAD-dependent monooxygenase penE from Penicillium thymicola.